We begin with the raw amino-acid sequence, 351 residues long: Methylthioribose-1-phosphate isomerase (351 aa).

Catalysis depends on Asp244, which acts as the Proton donor.

This sequence belongs to the eIF-2B alpha/beta/delta subunits family. MtnA subfamily.

The protein resides in the cytoplasm. It localises to the nucleus. The catalysed reaction is 5-(methylsulfanyl)-alpha-D-ribose 1-phosphate = 5-(methylsulfanyl)-D-ribulose 1-phosphate. It functions in the pathway amino-acid biosynthesis; L-methionine biosynthesis via salvage pathway; L-methionine from S-methyl-5-thio-alpha-D-ribose 1-phosphate: step 1/6. Its function is as follows. Catalyzes the interconversion of methylthioribose-1-phosphate (MTR-1-P) into methylthioribulose-1-phosphate (MTRu-1-P). This is Methylthioribose-1-phosphate isomerase from Anopheles gambiae (African malaria mosquito).